The chain runs to 937 residues: Proprotein convertase subtilisin/kexin type 6 (937 aa).

Residues 1-16 are compositionally biased toward pro residues; sequence MPPRAPPAPGPRPPPR. The disordered stretch occupies residues 1-22; it reads MPPRAPPAPGPRPPPRAAGRHG. An N-terminal signal peptide occupies residues 1–45; the sequence is MPPRAPPAPGPRPPPRAAGRHGLSPLAPRPWRWLLLLALPAVCSA. The propeptide occupies 46-132; it reads LPPPRPVYTN…QQEVKRRVKR (87 aa). The region spanning 149-468 is the Peptidase S8 domain; sequence MWYMHCADKN…FGLVDAEALV (320 aa). Residues Asp186 and His227 each act as charge relay system in the active site. Asn240 is a glycosylation site (N-linked (GlcNAc...) asparagine). Residue Ser401 is the Charge relay system of the active site. A P/Homo B domain is found at 476-616; that stretch reads AVPSQHMCVA…SLILYGTAEH (141 aa). A Cell attachment site motif is present at residues 534–536; sequence RGD. The disordered stretch occupies residues 621-656; the sequence is FSSHQSRSRMLELSVPEQEPLKAEGPPPQAETPEEE. 5 FU repeats span residues 660-707, 711-758, 762-806, 810-855, and 863-911; these read TGVC…GYFG, ARRC…GLYA, QRLC…GTYF, LIRC…GFYP, and HKVC…ETFC. The segment at 680–898 is CRM (Cys-rich motif); the sequence is CLNCVHFSLG…GFTQLGTSCI (219 aa). N-linked (GlcNAc...) asparagine glycans are attached at residues Asn882 and Asn900. The 39-residue stretch at 899 to 937 folds into the PLAC domain; sequence TNHTCSNADETFCEMVKSNRLCERKLFIQFCCRTCLLAG.

It belongs to the peptidase S8 family. As to quaternary structure, the precursor protein seems to exist in the reticulum endoplasmic as both a monomer and a dimer-sized complex whereas mature form exists only as a monomer, suggesting that propeptide cleavage affects its tertiary or quaternary structure. Interacts (immature form including the propeptide) with RCN3; probably involved in the maturation and the secretion of PCSK6. Ca(2+) is required as a cofactor. In terms of tissue distribution, high expression in the anterior pituitary and in several brain regions, the atrium, and the ventricle.

Functionally, serine endoprotease that processes various proproteins by cleavage at paired basic amino acids, recognizing the RXXX[KR]R consensus motif. Likely functions in the constitutive secretory pathway, with unique restricted distribution in both neuroendocrine and non-neuroendocrine tissues. This is Proprotein convertase subtilisin/kexin type 6 (Pcsk6) from Rattus norvegicus (Rat).